The primary structure comprises 117 residues: Anti-sigma F factor antagonist (117 aa).

The STAS domain occupies 3–113 (LGIDMNVKES…QSEQQALLTL (111 aa)). Residue S58 is modified to Phosphoserine.

This sequence belongs to the anti-sigma-factor antagonist family. Phosphorylated by SpoIIAB on a serine residue.

In terms of biological role, in the phosphorylated form it could act as an anti-anti-sigma factor that counteracts SpoIIAB and thus releases sigma f from inhibition. In Bacillus subtilis (strain 168), this protein is Anti-sigma F factor antagonist (spoIIAA).